The primary structure comprises 351 residues: Histidine protein kinase SaeS (351 aa).

A run of 2 helical transmembrane segments spans residues 9–29 (IIIGVVSSILLTSTILAIAYI) and 40–60 (TLTLTTIITSCLTLLICSIFI). One can recognise an HAMP domain in the interval 61-114 (NPLIQKIKQFNIKTKQFANGNYASNDKTFNSPKEIYELNQSFNKMASEITQQMN). One can recognise a Histidine kinase domain in the interval 129–348 (NLAHDLKTPL…TMTVTLHKLD (220 aa)). Histidine 132 carries the phosphohistidine; by autocatalysis modification.

Post-translationally, autophosphorylated.

The protein resides in the cell membrane. It carries out the reaction ATP + protein L-histidine = ADP + protein N-phospho-L-histidine.. Functionally, member of the two-component regulatory system SaeR/SaeS involved in the regulation of staphylococcal virulence factors in a strain-dependent fashion. Probably functions as a membrane-associated protein kinase that upon sensing the appropriate signal, autophosphorylates and in turn activates the cytosolic response regulator SaeR. The protein is Histidine protein kinase SaeS (saeS) of Staphylococcus aureus (strain MRSA252).